Reading from the N-terminus, the 485-residue chain is Argininosuccinate lyase (485 aa).

It belongs to the lyase 1 family. Argininosuccinate lyase subfamily.

The protein resides in the cytoplasm. The catalysed reaction is 2-(N(omega)-L-arginino)succinate = fumarate + L-arginine. It participates in amino-acid biosynthesis; L-arginine biosynthesis; L-arginine from L-ornithine and carbamoyl phosphate: step 3/3. The chain is Argininosuccinate lyase from Nitrosopumilus maritimus (strain SCM1).